The chain runs to 392 residues: 1-deoxy-D-xylulose 5-phosphate reductoisomerase (392 aa).

5 residues coordinate NADPH: Thr-10, Gly-11, Ser-12, Ile-13, and Asn-124. Lys-125 provides a ligand contact to 1-deoxy-D-xylulose 5-phosphate. Glu-126 is an NADPH binding site. Asp-150 is a binding site for Mn(2+). Ser-151, Glu-152, Ser-180, and His-203 together coordinate 1-deoxy-D-xylulose 5-phosphate. Glu-152 provides a ligand contact to Mn(2+). Gly-209 contributes to the NADPH binding site. Positions 216, 221, 222, and 225 each coordinate 1-deoxy-D-xylulose 5-phosphate. Glu-225 contacts Mn(2+).

The protein belongs to the DXR family. Mg(2+) is required as a cofactor. Mn(2+) serves as cofactor.

It catalyses the reaction 2-C-methyl-D-erythritol 4-phosphate + NADP(+) = 1-deoxy-D-xylulose 5-phosphate + NADPH + H(+). It participates in isoprenoid biosynthesis; isopentenyl diphosphate biosynthesis via DXP pathway; isopentenyl diphosphate from 1-deoxy-D-xylulose 5-phosphate: step 1/6. Its function is as follows. Catalyzes the NADPH-dependent rearrangement and reduction of 1-deoxy-D-xylulose-5-phosphate (DXP) to 2-C-methyl-D-erythritol 4-phosphate (MEP). The protein is 1-deoxy-D-xylulose 5-phosphate reductoisomerase of Saccharophagus degradans (strain 2-40 / ATCC 43961 / DSM 17024).